Reading from the N-terminus, the 269-residue chain is Glutamate racemase (269 aa).

Residues 7-8 (DS) and 39-40 (YG) contribute to the substrate site. C70 serves as the catalytic Proton donor/acceptor. 71–72 (NT) contributes to the substrate binding site. The Proton donor/acceptor role is filled by C194. 195–196 (TH) provides a ligand contact to substrate.

This sequence belongs to the aspartate/glutamate racemases family.

The catalysed reaction is L-glutamate = D-glutamate. The protein operates within cell wall biogenesis; peptidoglycan biosynthesis. In terms of biological role, provides the (R)-glutamate required for cell wall biosynthesis. This Ruegeria sp. (strain TM1040) (Silicibacter sp.) protein is Glutamate racemase.